A 274-amino-acid polypeptide reads, in one-letter code: Large ribosomal subunit protein uL2 (274 aa).

Disordered regions lie at residues 28-54 and 223-265; these read APYA…TRHI and VAMN…KRTD. The span at 39–48 shows a compositional bias: low complexity; sequence KSGGRNNNGR.

Belongs to the universal ribosomal protein uL2 family. As to quaternary structure, part of the 50S ribosomal subunit. Forms a bridge to the 30S subunit in the 70S ribosome.

Its function is as follows. One of the primary rRNA binding proteins. Required for association of the 30S and 50S subunits to form the 70S ribosome, for tRNA binding and peptide bond formation. It has been suggested to have peptidyltransferase activity; this is somewhat controversial. Makes several contacts with the 16S rRNA in the 70S ribosome. This chain is Large ribosomal subunit protein uL2, found in Alteromonas mediterranea (strain DSM 17117 / CIP 110805 / LMG 28347 / Deep ecotype).